The primary structure comprises 264 residues: Thiazole synthase (264 aa).

The active-site Schiff-base intermediate with DXP is Lys106. Residues Gly167, 193 to 194 (AG), and 215 to 216 (NT) each bind 1-deoxy-D-xylulose 5-phosphate.

Belongs to the ThiG family. Homotetramer. Forms heterodimers with either ThiH or ThiS.

It localises to the cytoplasm. It catalyses the reaction [ThiS sulfur-carrier protein]-C-terminal-Gly-aminoethanethioate + 2-iminoacetate + 1-deoxy-D-xylulose 5-phosphate = [ThiS sulfur-carrier protein]-C-terminal Gly-Gly + 2-[(2R,5Z)-2-carboxy-4-methylthiazol-5(2H)-ylidene]ethyl phosphate + 2 H2O + H(+). The protein operates within cofactor biosynthesis; thiamine diphosphate biosynthesis. In terms of biological role, catalyzes the rearrangement of 1-deoxy-D-xylulose 5-phosphate (DXP) to produce the thiazole phosphate moiety of thiamine. Sulfur is provided by the thiocarboxylate moiety of the carrier protein ThiS. In vitro, sulfur can be provided by H(2)S. The polypeptide is Thiazole synthase (Stenotrophomonas maltophilia (strain K279a)).